Reading from the N-terminus, the 325-residue chain is Peroxidase 47 (325 aa).

Positions 1–36 (MLTRFKKQNNKMVRANIVSMVLLMHAIVGFPFHARG) are cleaved as a signal peptide. 4 cysteine pairs are disulfide-bonded: Cys-46–Cys-125, Cys-79–Cys-84, Cys-131–Cys-321, and Cys-209–Cys-235. His-77 (proton acceptor) is an active-site residue. Ca(2+) is bound by residues Asp-78, Gly-83, Asp-85, and Ser-87. Pro-172 contacts substrate. An N-linked (GlcNAc...) asparagine glycan is attached at Asn-177. Position 202 (His-202) interacts with heme b. A Ca(2+)-binding site is contributed by Thr-203. Asp-246, Thr-248, and Asp-253 together coordinate Ca(2+).

This sequence belongs to the peroxidase family. Classical plant (class III) peroxidase subfamily. Requires heme b as cofactor. The cofactor is Ca(2+).

It is found in the secreted. The enzyme catalyses 2 a phenolic donor + H2O2 = 2 a phenolic radical donor + 2 H2O. Its function is as follows. Removal of H(2)O(2), oxidation of toxic reductants, biosynthesis and degradation of lignin, suberization, auxin catabolism, response to environmental stresses such as wounding, pathogen attack and oxidative stress. These functions might be dependent on each isozyme/isoform in each plant tissue. The protein is Peroxidase 47 (PER47) of Arabidopsis thaliana (Mouse-ear cress).